The chain runs to 242 residues: Uridylate kinase (242 aa).

An ATP-binding site is contributed by 15 to 18; the sequence is KLSG. Residues 23-28 form an involved in allosteric activation by GTP region; that stretch reads GDEGFG. Position 57 (glycine 57) interacts with UMP. ATP contacts are provided by glycine 58 and arginine 62. Residues aspartate 77 and 138-145 contribute to the UMP site; that span reads TGNPFCTT. 3 residues coordinate ATP: threonine 165, tyrosine 171, and aspartate 174.

This sequence belongs to the UMP kinase family. As to quaternary structure, homohexamer.

It localises to the cytoplasm. The enzyme catalyses UMP + ATP = UDP + ADP. Its pathway is pyrimidine metabolism; CTP biosynthesis via de novo pathway; UDP from UMP (UMPK route): step 1/1. Its activity is regulated as follows. Allosterically activated by GTP. Inhibited by UTP. In terms of biological role, catalyzes the reversible phosphorylation of UMP to UDP. The polypeptide is Uridylate kinase (Shewanella sp. (strain MR-4)).